Here is a 483-residue protein sequence, read N- to C-terminus: Regulatory protein ViaA (483 aa).

This sequence belongs to the ViaA family. Homodimer. Interacts with RavA.

It localises to the cytoplasm. Its function is as follows. Component of the RavA-ViaA chaperone complex, which may act on the membrane to optimize the function of some of the respiratory chains. ViaA stimulates the ATPase activity of RavA. The protein is Regulatory protein ViaA of Shigella boydii serotype 18 (strain CDC 3083-94 / BS512).